The chain runs to 964 residues: Reticulon-3 (964 aa).

Low complexity predominate over residues 1 to 24 (MAESSAATQSPSVSSSSSGAEPSA). 3 disordered regions span residues 1 to 32 (MAES…GGSP), 68 to 109 (AGLS…SETL), and 179 to 200 (WVVK…DRSA). An N-acetylalanine modification is found at A2. The Cytoplasmic segment spans residues 2–795 (AESSAATQSP…KKTGFVFGTT (794 aa)). Position 31 is a phosphoserine (S31). The span at 80 to 91 (SKSMTSSFLSSS) shows a compositional bias: low complexity. Phosphoserine is present on residues S217, S225, S230, S233, S270, S303, and S429. The tract at residues 479–536 (ITEKPDSLPSAAAKTSEREIKETPSRETVRSEMCENSEQPQAQPETPTQKSLEGEVAS) is disordered. Basic and acidic residues predominate over residues 493–511 (TSEREIKETPSRETVRSEM). Over residues 516 to 527 (EQPQAQPETPTQ) the composition is skewed to low complexity. S529 carries the post-translational modification Phosphoserine. T593 is subject to Phosphothreonine. Residues S596, S597, and S673 each carry the phosphoserine modification. Disordered regions lie at residues 645–674 (ELSG…TMSP) and 697–723 (VQDE…SSSD). Residues 712–723 (FAPQSGPQSSSD) show a composition bias toward polar residues. Positions 776 to 964 (VHDLIFWRDV…LPGIAKKKAE (189 aa)) constitute a Reticulon domain. Residues 796-819 (LIMLLSLAAFSVISVVSYLILALL) constitute an intramembrane region (helical). Topologically, residues 820 to 876 (SVTISFRVYKSVIQAVQKSEEGHPFKAYLDVDITLSSEAFHNYMNAAMVHVNKALKL) are cytoplasmic. Residues 877–899 (IIRLFLVEDLVDSLKLAVFMWLM) constitute an intramembrane region (helical). At 900–903 (TYVG) the chain is on the cytoplasmic side. Positions 904-926 (AVFNGITLLILAELLVFSVPIVY) form an intramembrane region, helical. Positions 919-964 (VFSVPIVYEKYKTQIDHYVGIARDQTKSIVEKIQAKLPGIAKKKAE) are interaction with FADD. Topologically, residues 927–964 (EKYKTQIDHYVGIARDQTKSIVEKIQAKLPGIAKKKAE) are cytoplasmic. The tract at residues 932-934 (QID) is interaction with BACE1.

In terms of assembly, homodimer. Interacts with RTN4. Isoform 3 interacts with BACE1, BACE2, BCL2 and FADD. Interacts with ATL1 and ATL2. Isoform 3 interacts with TMEM33. Interacts with ZFYVE27 and with KIF5A in a ZFYVE27-dependent manner. Interacts with RIGI. Interacts with TRIM25. As to expression, isoform 1, isoform 3, isoform 4 and isoform 5 are expressed in spinal cord. Isoform 1 is present in brain, where it is expressed in the neurons of cerebral cortex, hippocampus, hypothalamus and cerebellum (at protein level).

The protein resides in the endoplasmic reticulum membrane. It is found in the golgi apparatus membrane. Functionally, may be involved in membrane trafficking in the early secretory pathway. Inhibits BACE1 activity and amyloid precursor protein processing. May induce caspase-8 cascade and apoptosis. May favor BCL2 translocation to the mitochondria upon endoplasmic reticulum stress. Induces the formation of endoplasmic reticulum tubules. Also acts as an inflammation-resolving regulator by interacting with both TRIM25 and RIGI, subsequently impairing RIGI 'Lys-63'-linked polyubiquitination leading to IRF3 and NF-kappa-B inhibition. In Mus musculus (Mouse), this protein is Reticulon-3 (Rtn3).